Here is a 695-residue protein sequence, read N- to C-terminus: Elongation factor G (695 aa).

The 276-residue stretch at 10-285 (DKTRNIGIMA…GVVDYLPSPL (276 aa)) folds into the tr-type G domain. GTP is bound by residues 19 to 26 (AHIDAGKT), 83 to 87 (DTPGH), and 137 to 140 (NKMD).

It belongs to the TRAFAC class translation factor GTPase superfamily. Classic translation factor GTPase family. EF-G/EF-2 subfamily.

It localises to the cytoplasm. Functionally, catalyzes the GTP-dependent ribosomal translocation step during translation elongation. During this step, the ribosome changes from the pre-translocational (PRE) to the post-translocational (POST) state as the newly formed A-site-bound peptidyl-tRNA and P-site-bound deacylated tRNA move to the P and E sites, respectively. Catalyzes the coordinated movement of the two tRNA molecules, the mRNA and conformational changes in the ribosome. The polypeptide is Elongation factor G (Latilactobacillus sakei subsp. sakei (strain 23K) (Lactobacillus sakei subsp. sakei)).